Consider the following 552-residue polypeptide: Antibiotic resistance protein MAB_2355c (552 aa).

2 ABC transporter domains span residues 4-270 and 332-552; these read VQLD…RRWD and AKRA…PQWV. ATP contacts are provided by residues 37–44 and 364–371; these read GPNGTGKT and GGNGTGKS.

This sequence belongs to the ABC transporter superfamily. ABCF family.

The catalysed reaction is ATP + H2O = ADP + phosphate + H(+). With respect to regulation, the ATPase activity can be inhibited by ribosome-targeting antibiotics. Functionally, exhibits ATP hydrolysis activity and contributes to macrolide resistance by ribosome protection. Can also hydrolyze GTP, TTP and CTP but to a lesser extent than ATP. In vitro, rescues the transcription and translation activities affected by macrolides. Increased expression correlates with increased resistance to clarithromycin, one of the main drugs used to treat M.abscessus. This chain is Antibiotic resistance protein MAB_2355c, found in Mycobacteroides abscessus (strain ATCC 19977 / DSM 44196 / CCUG 20993 / CIP 104536 / JCM 13569 / NCTC 13031 / TMC 1543 / L948) (Mycobacterium abscessus).